A 381-amino-acid polypeptide reads, in one-letter code: PqqA peptide cyclase (381 aa).

In terms of domain architecture, Radical SAM core spans 12 to 228 (VGPPLWLLAE…AEYRQRLAAE (217 aa)). Residues cysteine 26, cysteine 30, and cysteine 33 each coordinate [4Fe-4S] cluster.

This sequence belongs to the radical SAM superfamily. PqqE family. As to quaternary structure, interacts with PqqD. The interaction is necessary for activity of PqqE. The cofactor is [4Fe-4S] cluster.

The catalysed reaction is [PQQ precursor protein] + S-adenosyl-L-methionine = E-Y cross-linked-[PQQ precursor protein] + 5'-deoxyadenosine + L-methionine + H(+). It functions in the pathway cofactor biosynthesis; pyrroloquinoline quinone biosynthesis. Functionally, catalyzes the cross-linking of a glutamate residue and a tyrosine residue in the PqqA protein as part of the biosynthesis of pyrroloquinoline quinone (PQQ). The protein is PqqA peptide cyclase of Pseudomonas aeruginosa (strain LESB58).